The chain runs to 67 residues: Large ribosomal subunit protein uL29 (67 aa).

It belongs to the universal ribosomal protein uL29 family.

This is Large ribosomal subunit protein uL29 from Exiguobacterium sp. (strain ATCC BAA-1283 / AT1b).